The primary structure comprises 526 residues: Catalase (526 aa).

Basic and acidic residues predominate over residues 1 to 22; the sequence is MADDREKSTDQMKLWKEGRGSQ. Residues 1–29 form a disordered region; that stretch reads MADDREKSTDQMKLWKEGRGSQRPDVLTT. Catalysis depends on residues histidine 75 and asparagine 148. NADP(+) is bound by residues histidine 194, serine 201, arginine 203, asparagine 213, lysine 237, tryptophan 303, histidine 305, and lysine 306. Tyrosine 358 contributes to the heme binding site.

Belongs to the catalase family. As to quaternary structure, homotetramer. Heme is required as a cofactor. It depends on NADP(+) as a cofactor.

The protein resides in the peroxisome matrix. It catalyses the reaction 2 H2O2 = O2 + 2 H2O. Functionally, catalyzes the degradation of hydrogen peroxide (H(2)O(2)) generated by peroxisomal oxidases to water and oxygen, thereby protecting cells from the toxic effects of hydrogen peroxide. This chain is Catalase (cat), found in Danio rerio (Zebrafish).